The primary structure comprises 73 residues: Pollen allergen Amb t 5 (73 aa).

Positions 1 to 20 (MKNIFMLTLFILIITSTIKA) are cleaved as a signal peptide. A propeptide spanning residues 21 to 33 (IGSTNEVDEIKQE) is cleaved from the precursor. Intrachain disulfides connect C38–C68, C44–C59, C51–C61, and C52–C72.

Monomer.

The polypeptide is Pollen allergen Amb t 5 (Ambrosia trifida (Giant ragweed)).